The chain runs to 254 residues: 3-dehydroquinate dehydratase (254 aa).

3-dehydroquinate contacts are provided by residues 47–49 (EFR) and Arg-83. The active-site Proton donor/acceptor is His-144. Catalysis depends on Lys-171, which acts as the Schiff-base intermediate with substrate. Residues Arg-213, Ser-232, and Gln-236 each contribute to the 3-dehydroquinate site.

The protein belongs to the type-I 3-dehydroquinase family. In terms of assembly, homodimer.

It catalyses the reaction 3-dehydroquinate = 3-dehydroshikimate + H2O. It functions in the pathway metabolic intermediate biosynthesis; chorismate biosynthesis; chorismate from D-erythrose 4-phosphate and phosphoenolpyruvate: step 3/7. Functionally, involved in the third step of the chorismate pathway, which leads to the biosynthesis of aromatic amino acids. Catalyzes the cis-dehydration of 3-dehydroquinate (DHQ) and introduces the first double bond of the aromatic ring to yield 3-dehydroshikimate. This Neisseria meningitidis serogroup B (strain ATCC BAA-335 / MC58) protein is 3-dehydroquinate dehydratase.